Reading from the N-terminus, the 87-residue chain is Protein Tat (87 aa).

The segment at 1–21 is disordered; that stretch reads MDPVDPNLEPWNHPGSQPRTP. The interval 1 to 24 is interaction with human CREBBP; it reads MDPVDPNLEPWNHPGSQPRTPCNK. The interval 1–48 is transactivation; it reads MDPVDPNLEPWNHPGSQPRTPCNKCYCKKCCYHCQMCFITKGLGISYG. The Zn(2+) site is built by cysteine 22, cysteine 25, and cysteine 27. The tract at residues 22–37 is cysteine-rich; the sequence is CNKCYCKKCCYHCQMC. N6-acetyllysine; by host PCAF is present on lysine 28. Residues cysteine 30, histidine 33, cysteine 34, and cysteine 37 each coordinate Zn(2+). Residues 38-48 form a core region; that stretch reads FITKGLGISYG. Residues 45–87 form a disordered region; that stretch reads ISYGRKKRRQRRRPPQGNQAHQDPLPEQPSSQHRGDHPTGPKE. The span at 48–58 shows a compositional bias: basic residues; the sequence is GRKKRRQRRRP. The Nuclear localization signal, RNA-binding (TAR), and protein transduction motif lies at 49 to 57; the sequence is RKKRRQRRR. The interval 49 to 87 is interaction with the host capping enzyme RNGTT; the sequence is RKKRRQRRRPPQGNQAHQDPLPEQPSSQHRGDHPTGPKE. N6-acetyllysine; by host EP300 and GCN5L2 is present on residues lysine 50 and lysine 51. 2 positions are modified to asymmetric dimethylarginine; by host PRMT6: arginine 52 and arginine 53. A compositionally biased stretch (basic and acidic residues) spans 77–87; the sequence is HRGDHPTGPKE. The short motif at 78–80 is the Cell attachment site element; the sequence is RGD.

The protein belongs to the lentiviruses Tat family. In terms of assembly, interacts with host CCNT1. Associates with the P-TEFb complex composed at least of Tat, P-TEFb (CDK9 and CCNT1), TAR RNA, RNA Pol II. Recruits the HATs CREBBP, TAF1/TFIID, EP300, PCAF and GCN5L2. Interacts with host KAT5/Tip60; this interaction targets the latter to degradation. Interacts with the host deacetylase SIRT1. Interacts with host capping enzyme RNGTT; this interaction stimulates RNGTT. Binds to host KDR, and to the host integrins ITGAV/ITGB3 and ITGA5/ITGB1. Interacts with host KPNB1/importin beta-1 without previous binding to KPNA1/importin alpha-1. Interacts with EIF2AK2. Interacts with host nucleosome assembly protein NAP1L1; this interaction may be required for the transport of Tat within the nucleus, since the two proteins interact at the nuclear rim. Interacts with host C1QBP/SF2P32; this interaction involves lysine-acetylated Tat. Interacts with the host chemokine receptors CCR2, CCR3 and CXCR4. Interacts with host DPP4/CD26; this interaction may trigger an anti-proliferative effect. Interacts with host LDLR. Interacts with the host extracellular matrix metalloproteinase MMP1. Interacts with host PRMT6; this interaction mediates Tat's methylation. Interacts with, and is ubiquitinated by MDM2/Hdm2. Interacts with host PSMC3 and HTATIP2. Interacts with STAB1; this interaction may overcome SATB1-mediated repression of IL2 and IL2RA (interleukin) in T cells by binding to the same domain than HDAC1. Interacts (when acetylated) with human CDK13, thereby increasing HIV-1 mRNA splicing and promoting the production of the doubly spliced HIV-1 protein Nef. Interacts with host TBP; this interaction modulates the activity of transcriptional pre-initiation complex. Interacts with host RELA. Interacts with host PLSCR1; this interaction negatively regulates Tat transactivation activity by altering its subcellular distribution. Asymmetrical arginine methylation by host PRMT6 seems to diminish the transactivation capacity of Tat and affects the interaction with host CCNT1. Post-translationally, acetylation by EP300, CREBBP, GCN5L2/GCN5 and PCAF regulates the transactivation activity of Tat. EP300-mediated acetylation of Lys-50 promotes dissociation of Tat from the TAR RNA through the competitive binding to PCAF's bromodomain. In addition, the non-acetylated Tat's N-terminus can also interact with PCAF. PCAF-mediated acetylation of Lys-28 enhances Tat's binding to CCNT1. Lys-50 is deacetylated by SIRT1. In terms of processing, polyubiquitination by host MDM2 does not target Tat to degradation, but activates its transactivation function and fosters interaction with CCNT1 and TAR RNA. Phosphorylated by EIF2AK2 on serine and threonine residues adjacent to the basic region important for TAR RNA binding and function. Phosphorylation of Tat by EIF2AK2 is dependent on the prior activation of EIF2AK2 by dsRNA.

The protein localises to the host nucleus. The protein resides in the host nucleolus. It localises to the host cytoplasm. Its subcellular location is the secreted. Transcriptional activator that increases RNA Pol II processivity, thereby increasing the level of full-length viral transcripts. Recognizes a hairpin structure at the 5'-LTR of the nascent viral mRNAs referred to as the transactivation responsive RNA element (TAR) and recruits the cyclin T1-CDK9 complex (P-TEFb complex) that will in turn hyperphosphorylate the RNA polymerase II to allow efficient elongation. The CDK9 component of P-TEFb and other Tat-activated kinases hyperphosphorylate the C-terminus of RNA Pol II that becomes stabilized and much more processive. Other factors such as HTATSF1/Tat-SF1, SUPT5H/SPT5, and HTATIP2 are also important for Tat's function. Besides its effect on RNA Pol II processivity, Tat induces chromatin remodeling of proviral genes by recruiting the histone acetyltransferases (HATs) CREBBP, EP300 and PCAF to the chromatin. This also contributes to the increase in proviral transcription rate, especially when the provirus integrates in transcriptionally silent region of the host genome. To ensure maximal activation of the LTR, Tat mediates nuclear translocation of NF-kappa-B by interacting with host RELA. Through its interaction with host TBP, Tat may also modulate transcription initiation. Tat can reactivate a latently infected cell by penetrating in it and transactivating its LTR promoter. In the cytoplasm, Tat is thought to act as a translational activator of HIV-1 mRNAs. In terms of biological role, extracellular circulating Tat can be endocytosed by surrounding uninfected cells via the binding to several surface receptors such as CD26, CXCR4, heparan sulfate proteoglycans (HSPG) or LDLR. Neurons are rarely infected, but they internalize Tat via their LDLR. Through its interaction with nuclear HATs, Tat is potentially able to control the acetylation-dependent cellular gene expression. Modulates the expression of many cellular genes involved in cell survival, proliferation or in coding for cytokines or cytokine receptors. Tat plays a role in T-cell and neurons apoptosis. Tat induced neurotoxicity and apoptosis probably contribute to neuroAIDS. Circulating Tat also acts as a chemokine-like and/or growth factor-like molecule that binds to specific receptors on the surface of the cells, affecting many cellular pathways. In the vascular system, Tat binds to ITGAV/ITGB3 and ITGA5/ITGB1 integrins dimers at the surface of endothelial cells and competes with bFGF for heparin-binding sites, leading to an excess of soluble bFGF. In Homo sapiens (Human), this protein is Protein Tat.